A 333-amino-acid chain; its full sequence is DNA-directed RNA polymerase subunit alpha (333 aa).

The interval 1–239 is alpha N-terminal domain (alpha-NTD); that stretch reads MSAVLDKGSL…TQARCFLNIA (239 aa). Residues 259–333 are alpha C-terminal domain (alpha-CTD); sequence DASDLLSARI…SLGMNLDSHG (75 aa).

The protein belongs to the RNA polymerase alpha chain family. As to quaternary structure, homodimer. The RNAP catalytic core consists of 2 alpha, 1 beta, 1 beta' and 1 omega subunit. When a sigma factor is associated with the core the holoenzyme is formed, which can initiate transcription.

It catalyses the reaction RNA(n) + a ribonucleoside 5'-triphosphate = RNA(n+1) + diphosphate. In terms of biological role, DNA-dependent RNA polymerase catalyzes the transcription of DNA into RNA using the four ribonucleoside triphosphates as substrates. This is DNA-directed RNA polymerase subunit alpha from Neorickettsia sennetsu (strain ATCC VR-367 / Miyayama) (Ehrlichia sennetsu).